Consider the following 91-residue polypeptide: Non-specific lipid-transfer protein P5 (91 aa).

Cystine bridges form between Cys-3–Cys-50, Cys-13–Cys-27, Cys-28–Cys-73, and Cys-48–Cys-87.

The protein resides in the secreted. Plant non-specific lipid-transfer proteins transfer phospholipids as well as galactolipids across membranes. May play a role in wax or cutin deposition in the cell walls of expanding epidermal cells and certain secretory tissues. This Vitis sp. (Grape) protein is Non-specific lipid-transfer protein P5.